The primary structure comprises 303 residues: Probable serine/threonine-protein kinase FPV212 (303 aa).

One can recognise a Protein kinase domain in the interval 25–303; sequence WILGKQLGSG…NYESLKQMFL (279 aa). ATP contacts are provided by residues 31 to 39 and K54; that span reads LGSGGFGLV. D160 (proton acceptor) is an active-site residue.

This sequence belongs to the protein kinase superfamily. Ser/Thr protein kinase family. Poxviruses subfamily.

It carries out the reaction L-seryl-[protein] + ATP = O-phospho-L-seryl-[protein] + ADP + H(+). The catalysed reaction is L-threonyl-[protein] + ATP = O-phospho-L-threonyl-[protein] + ADP + H(+). This Vertebrata (FPV) protein is Probable serine/threonine-protein kinase FPV212.